We begin with the raw amino-acid sequence, 255 residues long: Zinc import ATP-binding protein ZnuC 1 (255 aa).

Residues Ile7 to Gln220 form the ABC transporter domain. Gly39 to Ser46 contributes to the ATP binding site. The interval His229–Ala255 is disordered.

It belongs to the ABC transporter superfamily. Zinc importer (TC 3.A.1.15.5) family. In terms of assembly, the complex is composed of two ATP-binding proteins (ZnuC), two transmembrane proteins (ZnuB) and a solute-binding protein (ZnuA).

It localises to the cell inner membrane. It catalyses the reaction Zn(2+)(out) + ATP(in) + H2O(in) = Zn(2+)(in) + ADP(in) + phosphate(in) + H(+)(in). In terms of biological role, part of the ABC transporter complex ZnuABC involved in zinc import. Responsible for energy coupling to the transport system. The chain is Zinc import ATP-binding protein ZnuC 1 from Hahella chejuensis (strain KCTC 2396).